The primary structure comprises 74 residues: Major structural pilin EpdE (74 aa).

Residues 1-12 (MKFLEKLTSKKG) constitute a propeptide that is removed on maturation. Gln13 is subject to Pyrrolidone carboxylic acid. The QXSXEXXXL motif lies at 13–21 (QIAMELGIL).

The N-terminus is cleaved by the prepilin peptidase EppA, which recognizes the class III signal sequence. In terms of processing, N-glycosylated. Glycosylated with an N-linked branched pentasaccharide glycan. May contain glycans at three sites. Glycosylation is AglB-dependent. The N-glycosylation does not occur unless the signal peptide has been cleaved first.

Its subcellular location is the secreted. The protein localises to the cell surface. It is found in the fimbrium. Functionally, major component of the type IV-like pili. The sequence is that of Major structural pilin EpdE from Methanococcus maripaludis (strain DSM 14266 / JCM 13030 / NBRC 101832 / S2 / LL).